Reading from the N-terminus, the 314-residue chain is Olfactory receptor 5P62 (314 aa).

At 1-28 the chain is on the extracellular side; the sequence is MAFIYNGSQTTVTEFILLGLTDDPVLKV. An N-linked (GlcNAc...) asparagine glycan is attached at Asn-6. Residues 29-49 traverse the membrane as a helical segment; it reads ILFCIILCIYLVTVFGNLSTI. Residues 50-57 lie on the Cytoplasmic side of the membrane; the sequence is LLIGVSSK. Residues 58 to 78 form a helical membrane-spanning segment; sequence LHHPMYFFLSHLASVDMGLSS. Over 79–102 the chain is Extracellular; that stretch reads SVTPNMLVNFLTEKNTISYLGCGI. A disulfide bridge connects residues Cys-100 and Cys-192. Residues 103-123 traverse the membrane as a helical segment; that stretch reads QLSSAAFFGAVEFFLLAAMAY. Over 124-136 the chain is Cytoplasmic; that stretch reads DRLVAICNPLLYS. A helical membrane pass occupies residues 137–157; it reads TKMSSQVCIQLVAGSYVGGFL. Topologically, residues 158 to 199 are extracellular; the sequence is NASFVTHFFFSFLFCGPNRVNHFFCDLSPMMELSCSDVSISE. The helical transmembrane segment at 200–220 threads the bilayer; that stretch reads IVISFSAGSFTMTTLFVIVIP. Residues 221–240 lie on the Cytoplasmic side of the membrane; it reads YFYIFITILKIRSTEGRQKA. A helical membrane pass occupies residues 241–261; that stretch reads FSTCTSHLTAVTLYYGTIIFI. Over 262–274 the chain is Extracellular; the sequence is YVMPKSTYSRDQN. A helical membrane pass occupies residues 275-295; the sequence is KVVSLFYMLVIPVLNPLIYSL. The Cytoplasmic portion of the chain corresponds to 296–314; the sequence is RNNEIKDALKRQFYRKTLL.

The protein belongs to the G-protein coupled receptor 1 family.

The protein resides in the cell membrane. In terms of biological role, potential odorant receptor. This Mus musculus (Mouse) protein is Olfactory receptor 5P62.